The primary structure comprises 3898 residues: Genome polyprotein (3898 aa).

The 168-residue stretch at 1 to 168 (MELITNELLY…LDCPLWVTSC (168 aa)) folds into the Peptidase C53 domain. Disordered stretches follow at residues 47-72 (LPHKRGERNVPTSLASLPKRGDCRSG), 172-209 (KEEGATKKKQQKPDRLEKGRMKIVPKESEKDSKTKPPD), and 223-245 (KKGKVKSKNTQDGLYHNKNKPPE). Residues histidine 49 and cysteine 69 each act as for N-terminal protease activity in the active site. Residues 172-207 (KEEGATKKKQQKPDRLEKGRMKIVPKESEKDSKTKP) are compositionally biased toward basic and acidic residues. Residues asparagine 272, asparagine 281, asparagine 296, and asparagine 335 are each glycosylated (N-linked (GlcNAc...) asparagine; by host). 2 disulfide bridges follow: cysteine 308–cysteine 352 and cysteine 338–cysteine 339. Catalysis depends on for E(rns) glycoprotein RNase activity residues histidine 344, glutamate 345, lysine 348, and histidine 349. Asparagine 365 and asparagine 370 each carry an N-linked (GlcNAc...) asparagine; by host glycan. Cystine bridges form between cysteine 380-cysteine 425 and cysteine 384-cysteine 408. Residues asparagine 413, asparagine 487, and asparagine 597 are each glycosylated (N-linked (GlcNAc...) asparagine; by host). Residues 498–666 (ASPYCDVDRK…WNAATTTAFL (169 aa)) lie on the Lumenal side of the membrane. A helical transmembrane segment spans residues 667–687 (VCLIKMVRGQVVQGILWLLLI). The Lumenal portion of the chain corresponds to 688-1035 (TGVQGHLDCK…DHHRDYFAES (348 aa)). 2 disulfides stabilise this stretch: cysteine 696-cysteine 740 and cysteine 751-cysteine 798. Asparagine 809, asparagine 878, asparagine 922, and asparagine 990 each carry an N-linked (GlcNAc...) asparagine; by host glycan. 8 helical membrane-spanning segments follow: residues 1036–1056 (ILVVVVALLGGRYVLWLLVTY), 1079–1099 (NLLTHDNVEVVTYFFLLYLLL), 1108–1128 (VLLLYHILVAHPLKSVIVILL), 1144–1164 (LGQIDVCFTMVVIIIIGLIIA), 1189–1209 (PGVDAAMAVITITLLMVSYVT), 1217–1237 (WLQCILSLVSGVFLIRCLIHL), 1247–1267 (IPNWRPLTLILFYLISTTVVT), and 1281–1301 (VPILLLITTLWADFLTLILIL). Asparagine 1357 carries an N-linked (GlcNAc...) asparagine; by host glycan. Residues 1360–1380 (MLLPLVRATLISCVSSKWQLI) form a helical membrane-spanning segment. Asparagine 1419 carries an N-linked (GlcNAc...) asparagine; by host glycan. The 149-residue stretch at 1441 to 1589 (RNLIIKHKVR…DLEHLGWILR (149 aa)) folds into the Peptidase C74 domain. Histidine 1447 acts as the For cysteine protease NS2 activity in catalysis. Asparagine 1451 carries N-linked (GlcNAc...) asparagine; by host glycosylation. Residues glutamate 1461 and cysteine 1512 each act as for cysteine protease NS2 activity in the active site. A helical membrane pass occupies residues 1568 to 1588 (MLMVGNLGEEVGDLEHLGWIL). Positions 1590-1763 (GPAVCKKITE…LPIFEASSGR (174 aa)) constitute a Peptidase S31 domain. Catalysis depends on charge relay system; for serine protease NS3 activity residues histidine 1658 and aspartate 1695. N-linked (GlcNAc...) asparagine; by host glycosylation occurs at asparagine 1713. Serine 1752 acts as the Charge relay system; for serine protease NS3 activity in catalysis. A Helicase ATP-binding domain is found at 1802-1960 (ITSMNRGDFK…QKHPIEEFIA (159 aa)). Position 1815 to 1822 (1815 to 1822 (LATGAGKT)) interacts with ATP. The DEAH box motif lies at 1910 to 1913 (DEYH). The 166-residue stretch at 1978 to 2143 (GLKIPVDEMK…NVTKSFREMN (166 aa)) folds into the Helicase C-terminal domain. 7 N-linked (GlcNAc...) asparagine; by host glycosylation sites follow: asparagine 2134, asparagine 2217, asparagine 2494, asparagine 2682, asparagine 2751, asparagine 2891, and asparagine 2988. Positions 3499 and 3501 each coordinate GTP. The region spanning 3518–3641 (PVAVSFDTKA…ITEKGLGLKF (124 aa)) is the RdRp catalytic domain. Asparagine 3688 carries an N-linked (GlcNAc...) asparagine; by host glycan. Residues arginine 3696 and lysine 3704 each contribute to the GTP site. Asparagine 3777 and asparagine 3793 each carry an N-linked (GlcNAc...) asparagine; by host glycan.

It belongs to the pestivirus polyprotein family. Homodimer; disulfide-linked. In terms of assembly, homodimer; disulfide-linked. Heterodimer with E1; disulfide-linked. As to quaternary structure, interacts with host IFIH1/MDA5; this interaction is involved in the inhibition of IFN-beta production. Heavily glycosylated. Post-translationally, the viral RNA of pestiviruses is expressed as a single polyprotein which undergoes post-translational proteolytic processing resulting in the production of at least eleven individual proteins. The N-terminal protease cleaves itself from the nascent polyprotein autocatalytically and thereby generates the N-terminus of the adjacent viral capsid protein C. In terms of processing, cleavage between E2 and p7 is partial.

The protein localises to the virion. Its subcellular location is the host membrane. It is found in the virion membrane. The protein resides in the host endoplasmic reticulum membrane. It localises to the host cytoplasm. It carries out the reaction Leu is conserved at position P1 for all four cleavage sites. Alanine is found at position P1' of the NS4A-NS4B cleavage site, whereas serine is found at position P1' of the NS3-NS4A, NS4B-NS5A and NS5A-NS5B cleavage sites.. The catalysed reaction is RNA(n) + a ribonucleoside 5'-triphosphate = RNA(n+1) + diphosphate. It catalyses the reaction a ribonucleoside 5'-triphosphate + H2O = a ribonucleoside 5'-diphosphate + phosphate + H(+). The enzyme catalyses ATP + H2O = ADP + phosphate + H(+). It carries out the reaction a ribonucleotidyl-ribonucleotide-RNA + H2O = a 3'-end 3'-phospho-ribonucleotide-RNA + a 5'-end dephospho-ribonucleoside-RNA + H(+). The catalysed reaction is a ribonucleotidyl-ribonucleotide-RNA = a 3'-end 2',3'-cyclophospho-ribonucleotide-RNA + a 5'-end dephospho-ribonucleoside-RNA. It catalyses the reaction a 3'-end 2',3'-cyclophospho-ribonucleotide-RNA + H2O = a 3'-end 3'-phospho-ribonucleotide-RNA + H(+). Inhibited by Zn(2+), which binds the catalytic site. Functionally, leader cysteine autoprotease that cleaves itself from the nascent polyprotein during translation of the viral mRNA. Once released, plays a role in the inhibition of host innate immune response by interacting with host IRF3 and inducing its proteasomal degradation. Packages viral RNA to form a viral nucleocapsid and thereby protects viral RNA. Also plays a role in transcription regulation. Protects the incoming virus against IFN-induced effectors. In terms of biological role, initial binding to target cell probably involves interaction of E(rns) with glycosaminoglycans. Also possesses intrinsic ribonuclease (RNase) activity that can inhibit the production of type I interferon and assist in the development of persistent infections. Its function is as follows. E1 and/or E2 are probably responsible of cell attachment with CD46 and subsequent fusion after internalization of the virion by endocytosis. Functionally, E1 and/or E2 are probably responsible of cell attachment with CD46 and subsequent fusion after internalization of the virion by endocytosis. Probably functions as a coeffector of fusion providing structural integrity to the fusion complex and possibly controlling exposure of the fusion motif in E1. Plays an essential role in the virus replication cycle by acting as a viroporin. Forms ion conductive pores, which alters the cell permeability allowing the transport of ions and other small molecules. Forms a leader sequence to properly orient NS2 in the membrane. In terms of biological role, uncleaved NS2-3 is required for production of infectious virus. Its function is as follows. Plays a role in the regulation of viral RNA replication. Functionally, multifunctional protein that contains an N-terminal protease and a C-terminal helicase, playing essential roles in viral polyprotein processing and viral genome replication. The chymotrypsin-like serine protease activity utilizes NS4A as an essential cofactor and catalyzes the cleavage of the polyprotein leading to the release of NS4A, NS4B, NS5A, and NS5B. Interacts with NS5B to enhance RNA-dependent RNA polymerase activity. Acts as a cofactor for the NS3 protease activity. In terms of biological role, induces a specific membrane alteration that serves as a scaffold for the virus replication complex. Plays a role in the inhibition of host innate immune response by inhibiting RIGI/IFIH1-mediated IFN-beta production. Its function is as follows. Replicates the viral (+) and (-) genome. Initiates the primer-independent RNA replication via a de novo mechanism requiring GTP. In Bos taurus (Bovine), this protein is Genome polyprotein.